A 282-amino-acid chain; its full sequence is NADPH-dependent 7-cyano-7-deazaguanine reductase (282 aa).

88 to 90 contributes to the substrate binding site; that stretch reads IES. Position 90 to 91 (90 to 91) interacts with NADPH; that stretch reads SK. The active-site Thioimide intermediate is C190. Residue D197 is the Proton donor of the active site. Residue 229–230 participates in substrate binding; that stretch reads HE. Residue 258–259 participates in NADPH binding; that stretch reads RG.

It belongs to the GTP cyclohydrolase I family. QueF type 2 subfamily. As to quaternary structure, homodimer.

It is found in the cytoplasm. The enzyme catalyses 7-aminomethyl-7-carbaguanine + 2 NADP(+) = 7-cyano-7-deazaguanine + 2 NADPH + 3 H(+). Its pathway is tRNA modification; tRNA-queuosine biosynthesis. Functionally, catalyzes the NADPH-dependent reduction of 7-cyano-7-deazaguanine (preQ0) to 7-aminomethyl-7-deazaguanine (preQ1). The polypeptide is NADPH-dependent 7-cyano-7-deazaguanine reductase (Salmonella paratyphi C (strain RKS4594)).